A 268-amino-acid polypeptide reads, in one-letter code: Hydroxyethylthiazole kinase (268 aa).

Met47 contacts substrate. Residues Arg122 and Thr168 each contribute to the ATP site. Ala195 lines the substrate pocket.

The protein belongs to the Thz kinase family. Mg(2+) serves as cofactor.

The enzyme catalyses 5-(2-hydroxyethyl)-4-methylthiazole + ATP = 4-methyl-5-(2-phosphooxyethyl)-thiazole + ADP + H(+). It participates in cofactor biosynthesis; thiamine diphosphate biosynthesis; 4-methyl-5-(2-phosphoethyl)-thiazole from 5-(2-hydroxyethyl)-4-methylthiazole: step 1/1. In terms of biological role, catalyzes the phosphorylation of the hydroxyl group of 4-methyl-5-beta-hydroxyethylthiazole (THZ). In Rhizobium rhizogenes (strain K84 / ATCC BAA-868) (Agrobacterium radiobacter), this protein is Hydroxyethylthiazole kinase.